The primary structure comprises 522 residues: Protein RCC2 (522 aa).

Residues 1–83 (MPRKKAAAAA…TAGKAGGAAV (83 aa)) are disordered. Residue Ser-16 is modified to Phosphoserine. Thr-20 is modified (phosphothreonine). Residues 24–36 (GPRKRGGPAGRKR) show a composition bias toward basic residues. Phosphoserine is present on residues Ser-43, Ser-44, Ser-45, Ser-46, Ser-50, and Ser-51. The span at 71–82 (RPATAGKAGGAA) shows a compositional bias: low complexity. Residues Lys-92 and Lys-124 each carry the N6-acetyllysine modification. 7 RCC1 repeats span residues 103–165 (KGQL…SLLI), 168–219 (EGKL…ALTE), 221–271 (GSVF…IMDC), 273–347 (GNLY…VLDS), 348–401 (QKRV…AVSE), 403–447 (GGLF…VAAD), and 448–501 (ESTI…VIAR). Lys-293 is modified (N6-acetyllysine). The required for interaction with RAC1 stretch occupies residues 318–325 (KTKDGQIL). Thr-342 bears the Phosphothreonine mark. Residue Lys-377 is modified to N6-acetyllysine. Over residues 502–515 (DESETEKEKIKKLP) the composition is skewed to basic and acidic residues. Residues 502–522 (DESETEKEKIKKLPEYNPRTL) are disordered.

As to quaternary structure, interacts with RAC1. Interacts with nucleotide-free and with GDP and GTP-bound forms of RAC1, with a slight preference for GDP-bound RAC1. Binds preferentially to the nucleotide-free form of RAC1. Interacts with CORO1C. Interacts with microtubules.

The protein localises to the nucleus. The protein resides in the nucleolus. It localises to the cytoplasm. It is found in the cytoskeleton. Its subcellular location is the chromosome. The protein localises to the centromere. The protein resides in the spindle. It localises to the midbody. It is found in the cell membrane. Its function is as follows. Multifunctional protein that may affect its functions by regulating the activity of small GTPases, such as RAC1 and RALA. Required for normal progress through the cell cycle, both during interphase and during mitosis. Required for the presence of normal levels of MAD2L1, AURKB and BIRC5 on inner centromeres during mitosis, and for normal attachment of kinetochores to mitotic spindles. Required for normal organization of the microtubule cytoskeleton in interphase cells. Functions as guanine nucleotide exchange factor (GEF) for RALA. Interferes with the activation of RAC1 by guanine nucleotide exchange factors. Prevents accumulation of active, GTP-bound RAC1, and suppresses RAC1-mediated reorganization of the actin cytoskeleton and formation of membrane protrusions. Required for normal cellular responses to contacts with the extracellular matrix of adjacent cells, and for directional cell migration in response to a fibronectin gradient (in vitro). The protein is Protein RCC2 (RCC2) of Homo sapiens (Human).